Reading from the N-terminus, the 474-residue chain is Pleckstrin homology domain-containing family S member 1 (474 aa).

One can recognise a PH domain in the interval 20 to 135 (EVHKRDYFIK…WVSFMTPYCQ (116 aa)). 3 disordered regions span residues 232–251 (IAGP…DQGF), 272–321 (STSA…DDQK), and 449–474 (RDLP…AAGE). Over residues 238–248 (SGDSIESNSPD) the composition is skewed to polar residues. Over residues 449–458 (RDLPELERTP) the composition is skewed to basic and acidic residues.

The chain is Pleckstrin homology domain-containing family S member 1 from Mus musculus (Mouse).